The sequence spans 301 residues: tRNA pseudouridine synthase B (301 aa).

The active-site Nucleophile is Asp-47.

The protein belongs to the pseudouridine synthase TruB family. Type 1 subfamily.

The catalysed reaction is uridine(55) in tRNA = pseudouridine(55) in tRNA. Its function is as follows. Responsible for synthesis of pseudouridine from uracil-55 in the psi GC loop of transfer RNAs. This is tRNA pseudouridine synthase B from Cereibacter sphaeroides (strain ATCC 17023 / DSM 158 / JCM 6121 / CCUG 31486 / LMG 2827 / NBRC 12203 / NCIMB 8253 / ATH 2.4.1.) (Rhodobacter sphaeroides).